We begin with the raw amino-acid sequence, 481 residues long: MATTDPAIAAPDDSQLEAGRENIRANVGDALEKPSSSTGTMVDEPTDPNVVDWDGPHDPEHPLNWSKTQKNLHLVIVSLFTLAANLAATMFAPGAEELATEFSITNSTVTAMTVSLYVLGFALGPLLLAPLSELYGRLVIYYGCNFVYVVFTIGCAFSTNVAMFLVFRIICGCAASGPMSIGGGTVADLFPQEERGKAMALFTVGPLLGPSGLIGVATVIFMRETNYMVLLQRKAQRARKETGNDKLVPKLTRNETPKQMLARAIVRPLKLLIFSPIVLLISLYTGILFGLIFLLFTTFPSVFQDVYGFSPGTAGLAYLGLGIGMILGLVLFSVLSDKMLKQKSGAARPEDRLILMKWLGPITPLGLFIYGWTAKYAVHWIVPIIGTFVVGFGSLFVVIPGQIYLVDAFGAEAAASAMAANLLVRSPFGAFLDLTASPLYVSLGLGWGNSVLGFICLLFTPVPWLFYTYGERMRTHFKVDL.

Low complexity predominate over residues 1–13 (MATTDPAIAAPDD). The interval 1–58 (MATTDPAIAAPDDSQLEAGRENIRANVGDALEKPSSSTGTMVDEPTDPNVVDWDGPHD) is disordered. Residue N64 is glycosylated (N-linked (GlcNAc...) asparagine). The chain crosses the membrane as a helical span at residues 72–92 (LHLVIVSLFTLAANLAATMFA). N106 carries N-linked (GlcNAc...) asparagine glycosylation. 10 consecutive transmembrane segments (helical) span residues 111-131 (AMTV…LAPL), 146-166 (FVYV…MFLV), 169-189 (IICG…VADL), 201-221 (LFTV…TVIF), 276-296 (PIVL…FLLF), 315-335 (GLAY…FSVL), 353-373 (LILM…YGWT), 380-400 (WIVP…VVIP), 403-423 (IYLV…ANLL), and 439-459 (LYVS…CLLF).

The protein belongs to the major facilitator superfamily.

It localises to the cell membrane. Functionally, efflux pump that might be required for efficient secretion of equisetin or other secondary metabolies produced by the equisetin gene cluster. The protein is MFS transporter eqxG of Fusarium heterosporum.